A 234-amino-acid polypeptide reads, in one-letter code: MFLASLLRRIAFSYYDYKAYNFNIEKTDFVVIHIPDQIGDAMAIFPVIRALELHKIKHLLIVTSTINLEVFNALKLEQTKLTLVTMTMQDHATLKEIKDLAKNITQQYGTPDLCIEGMRKKNLKTMLFISQLKAKTNFQVVGITMNCFSPLCKNASSMDQKLRAPVPMTWAFMMREAGFPAVRPIYELPLSEDVLDEVREEMRSLGSYIAFNLEGSSQERTFSLSIAENLIAKI.

This is an uncharacterized protein from Escherichia coli (strain K12).